The following is a 238-amino-acid chain: Lipid transferase CIDEC (238 aa).

The tract at residues 1-35 is required for liquid-liquid phase separation (LLPS); it reads MDYAMKSLSLLYPRSLSRHVAVSTAVVTQQLVSEP. In terms of domain architecture, CIDE-N spans 41–118; the sequence is RARPCRVSTA…VLQKGQKWKS (78 aa).

Belongs to the CIDE family. In terms of assembly, homodimer. Interacts with CIDEA. Homooligomer; undergoes liquid-liquid phase separation (LLPS) via its N-terminus, facilitating lipid droplet fusion, occurs at the lipid droplet contact sites. Interacts with PLIN1. Interacts with NFAT5; this interaction is direct and retains NFAT5 in the cytoplasm. Interacts with CEBPB. Interacts with isoform CLSTN3beta of CLSTN3; inhibiting the lipid transferase activity of CIDEC. Post-translationally, ubiquitinated and targeted to proteasomal degradation, resulting in a short half-life (about 15 minutes in 3T3-L1 cells). Protein stability depends on triaclyglycerol synthesis, fatty acid availability and lipid droplet formation.

It is found in the lipid droplet. The protein resides in the endoplasmic reticulum. It localises to the nucleus. It catalyses the reaction a triacyl-sn-glycerol(in) = a triacyl-sn-glycerol(out). Lipid transferase specifically expressed in white adipose tissue, which promotes unilocular lipid droplet formation by mediating lipid droplet fusion. Lipid droplet fusion promotes their enlargement, restricting lipolysis and favoring lipid storage. Localizes on the lipid droplet surface, at focal contact sites between lipid droplets, and mediates atypical lipid droplet fusion by undergoing liquid-liquid phase separation (LLPS) and promoting directional net neutral lipid transfer from the smaller to larger lipid droplets. The transfer direction may be driven by the internal pressure difference between the contacting lipid droplet pair. Its role in neutral lipid transfer and lipid droplet enlargement is activated by the interaction with PLIN1. May also act as a CEBPB coactivator in the white adipose tissue to control the expression of a subset of CEBPB downstream target genes, including SOCS1, SOCS3, TGFB1, TGFBR1, ID2 and XDH. When overexpressed in preadipocytes, induces apoptosis or increases cell susceptibility to apoptosis induced by serum deprivation or TGFB treatment. In Rattus norvegicus (Rat), this protein is Lipid transferase CIDEC.